We begin with the raw amino-acid sequence, 476 residues long: Glutamyl-tRNA(Gln) amidotransferase subunit A (476 aa).

Residues Lys69 and Ser144 each act as charge relay system in the active site. The Acyl-ester intermediate role is filled by Ser168.

The protein belongs to the amidase family. GatA subfamily. In terms of assembly, heterotrimer of A, B and C subunits.

It catalyses the reaction L-glutamyl-tRNA(Gln) + L-glutamine + ATP + H2O = L-glutaminyl-tRNA(Gln) + L-glutamate + ADP + phosphate + H(+). Its function is as follows. Allows the formation of correctly charged Gln-tRNA(Gln) through the transamidation of misacylated Glu-tRNA(Gln) in organisms which lack glutaminyl-tRNA synthetase. The reaction takes place in the presence of glutamine and ATP through an activated gamma-phospho-Glu-tRNA(Gln). In Sulfolobus acidocaldarius (strain ATCC 33909 / DSM 639 / JCM 8929 / NBRC 15157 / NCIMB 11770), this protein is Glutamyl-tRNA(Gln) amidotransferase subunit A.